Consider the following 219-residue polypeptide: FMN-dependent NADH:quinone oxidoreductase 2 (219 aa).

FMN is bound by residues S10 and 23-25; that span reads SIS.

Belongs to the azoreductase type 1 family. Homodimer. Requires FMN as cofactor.

The catalysed reaction is 2 a quinone + NADH + H(+) = 2 a 1,4-benzosemiquinone + NAD(+). It catalyses the reaction N,N-dimethyl-1,4-phenylenediamine + anthranilate + 2 NAD(+) = 2-(4-dimethylaminophenyl)diazenylbenzoate + 2 NADH + 2 H(+). Functionally, quinone reductase that provides resistance to thiol-specific stress caused by electrophilic quinones. In terms of biological role, also exhibits azoreductase activity. Catalyzes the reductive cleavage of the azo bond in aromatic azo compounds to the corresponding amines. This Colwellia psychrerythraea (strain 34H / ATCC BAA-681) (Vibrio psychroerythus) protein is FMN-dependent NADH:quinone oxidoreductase 2.